The following is a 262-amino-acid chain: tRNA pseudouridine synthase A (262 aa).

Residue Asp-51 is the Nucleophile of the active site. A substrate-binding site is contributed by Tyr-109.

Belongs to the tRNA pseudouridine synthase TruA family. As to quaternary structure, homodimer.

The catalysed reaction is uridine(38/39/40) in tRNA = pseudouridine(38/39/40) in tRNA. Functionally, formation of pseudouridine at positions 38, 39 and 40 in the anticodon stem and loop of transfer RNAs. This chain is tRNA pseudouridine synthase A, found in Actinobacillus pleuropneumoniae serotype 5b (strain L20).